Here is a 65-residue protein sequence, read N- to C-terminus: uncharacterized protein (65 aa).

The disordered stretch occupies residues 1-22 (MEKETPQQETKQSTNKESGFFD). Positions 7–17 (QQETKQSTNKE) are enriched in polar residues. The stretch at 22–65 (DEIIKRTNQLLEKEKELHEKYNKEITSQQDQIDQLKKKINQLKY) forms a coiled coil.

This is an uncharacterized protein from Dictyostelium discoideum (Social amoeba).